The chain runs to 276 residues: MADKALKVGIVGYGHLGQFLVEKIQSEGAEVGLQLAFVWNRNADKLKDSLPKDLILHDLSDFTQRDTDVIVEVCHPLIVKEFGVRFLSHAHFLVGSPSALSDGQLEQDLRTAAKQQGKTLYVPSGALWGGQDIQKMNDSGTLRALSIRMSKHPSCFRLTGGLLSDWTEGEGRRVLYRGSVAELCPLAPNNVNTMAAAAIAASKLGFHGVTGEIVSDTALADYHVVEVDVTGPDGFSVKTMRQNPAKLGAVTGKATYNSFWSSLLVCKGHGGRVYLC.

This sequence belongs to the L-aspartate dehydrogenase family.

In Danio rerio (Zebrafish), this protein is Aspartate dehydrogenase domain-containing protein (aspdh).